We begin with the raw amino-acid sequence, 176 residues long: RING-H2 finger protein ATL14 (176 aa).

The tract at residues Met-1–Thr-26 is disordered. The helical transmembrane segment at Phe-37 to Ser-57 threads the bilayer. The RING-type; atypical zinc finger occupies Cys-115–Arg-157.

The protein belongs to the RING-type zinc finger family. ATL subfamily.

It is found in the membrane. It carries out the reaction S-ubiquitinyl-[E2 ubiquitin-conjugating enzyme]-L-cysteine + [acceptor protein]-L-lysine = [E2 ubiquitin-conjugating enzyme]-L-cysteine + N(6)-ubiquitinyl-[acceptor protein]-L-lysine.. It functions in the pathway protein modification; protein ubiquitination. The chain is RING-H2 finger protein ATL14 (ATL14) from Arabidopsis thaliana (Mouse-ear cress).